The chain runs to 512 residues: rRNA N(6)-adenosine-methyltransferase ZCCHC4 (512 aa).

Zn(2+)-binding residues include C39, H41, C63, C72, C124, C127, H139, and H142. The GRF-type zinc finger occupies 39-81; it reads CPHGPTLLFVKVNQGKEETRKFYACSACRDRKDCNFFQWEDEK. S-adenosyl-L-methionine is bound by residues 171-174, R201, D223, 241-242, and D274; these read QYLF and NM. The tract at residues 335–355 is regulatory loop; the sequence is QVDYDNHALYKHGKTGRKQSP. C378, C381, H391, C392, C395, C398, H408, C409, C412, C415, H422, C423, C426, C429, H434, and C436 together coordinate Zn(2+). The DHHC domain maps to 393-445; it reads VHCNSCTSKDGRKWSHCFLCKKCVKPSWIHCNTCNRCALPDHSCLGPKDGCFI. The segment at 441-458 adopts a CCHC-type zinc-finger fold; sequence DGCFICGALDHKRSNCPN.

The protein belongs to the ZCCHC4 family. In terms of assembly, interacts with components of the ASC-1 complex TRIP4, ASCC1, ASCC2 and ASCC3. Interact with AHCYL1 and AHCYL2. Interact with YTHDC2.

It is found in the cytoplasm. The protein localises to the nucleus. The protein resides in the nucleolus. It carries out the reaction adenosine(4220) in 28S rRNA + S-adenosyl-L-methionine = N(6)-methyladenosine(4220) in 28S rRNA + S-adenosyl-L-homocysteine + H(+). In terms of biological role, rRNA N6-methyltransferase that specifically methylates the adenine in position 4220 of 28S rRNA. N6-methylation of adenine(4220) in 28S rRNA is required for translation. The polypeptide is rRNA N(6)-adenosine-methyltransferase ZCCHC4 (Mus musculus (Mouse)).